A 460-amino-acid chain; its full sequence is Serine--tRNA ligase (460 aa).

Position 255–257 (255–257 (TAE)) interacts with L-serine. Residues 286–288 (RKE) and valine 302 contribute to the ATP site. Residue glutamate 309 coordinates L-serine. 373 to 376 (EMVS) contributes to the ATP binding site. L-serine is bound at residue threonine 409.

Belongs to the class-II aminoacyl-tRNA synthetase family. Type-1 seryl-tRNA synthetase subfamily. As to quaternary structure, homodimer. The tRNA molecule binds across the dimer.

The protein localises to the cytoplasm. The catalysed reaction is tRNA(Ser) + L-serine + ATP = L-seryl-tRNA(Ser) + AMP + diphosphate + H(+). It carries out the reaction tRNA(Sec) + L-serine + ATP = L-seryl-tRNA(Sec) + AMP + diphosphate + H(+). It functions in the pathway aminoacyl-tRNA biosynthesis; selenocysteinyl-tRNA(Sec) biosynthesis; L-seryl-tRNA(Sec) from L-serine and tRNA(Sec): step 1/1. Catalyzes the attachment of serine to tRNA(Ser). Is also able to aminoacylate tRNA(Sec) with serine, to form the misacylated tRNA L-seryl-tRNA(Sec), which will be further converted into selenocysteinyl-tRNA(Sec). The sequence is that of Serine--tRNA ligase from Aeropyrum pernix (strain ATCC 700893 / DSM 11879 / JCM 9820 / NBRC 100138 / K1).